The following is a 686-amino-acid chain: MDLLRLSRLFSGPHPIGLSVLQRLDLLRSTQWTGGREGPAWLRAASCSSSSHQKRMSSLCSDSSTPVAPQEEEEEESFGTLSEKFSSRRIFHKSTAQLYNLKLKEQGVEEEELEPRLRQGGRNTPYWYFLQCKRLLKEGKLAEALDLFERQMLKEERLQPLECNYTVLIGGCGRVGYLKKAFRLFNDMKKRDLEPSDATYTALFNVCAESPWKDSALQSALKLRQQLQAQNFQLNLKTYHALLKVAAKCADLRVCLEVFKEIIQKGHAVTEETFCFLLMGCIQDKKTGFRQAMQVWRQMLSLGIKPSRHGYNLLLGAARDCGLGDPEVASRLLLTSQEETILLQPPTGRRLAGGKVQAKTRHGVSVKHVEALERQLFLEPSHKLEGPPAFPEARETSRTQPEVETKAEPGHMGALAPLALKPPDLELQVNLLSLGALSPAVVSFGTVATPADRLALMGGLEGFLGKMAEHRLQPDIKTLTLLAEVVEPGSPAESSLLSILDRHRVEADITFFNTLIRKKSKLGDLEGAKALLPILAKKGIVPNLRTFCNLAIGCHRPRDGMQLLADMKKSQVTPNTHIYSTLINAALKKLDYTYLISILKDMRRNSVPVNEVVIRQLEFAAQYPPTFDRYKEKNTYLEKIDGFRAYYKQWLKVMPAEEPPHPWQEFRDKPVRNQVITENAGGLRDG.

The span at 55–67 (RMSSLCSDSSTPV) shows a compositional bias: polar residues. Residues 55–79 (RMSSLCSDSSTPVAPQEEEEEESFG) form a disordered region. PPR repeat units follow at residues 124 to 160 (TPYW…RLQP), 161 to 195 (LECN…DLEP), 196 to 234 (SDAT…NFQL), 235 to 269 (NLKT…GHAV), and 270 to 306 (TEET…GIKP). The interval 383–407 (KLEGPPAFPEARETSRTQPEVETKA) is disordered. Residues 392-407 (EARETSRTQPEVETKA) show a composition bias toward basic and acidic residues. 2 PPR repeats span residues 508 to 542 (DITF…GIVP) and 575 to 609 (NTHI…SVPV).

The protein belongs to the PTCD1 family. As to quaternary structure, associates with mitochondrial leucine tRNAs. Interacts with ELAC2.

The protein localises to the mitochondrion matrix. Functionally, mitochondrial protein implicated in negative regulation of leucine tRNA levels, as well as negative regulation of mitochondria-encoded proteins and COX activity. Also affects the 3'-processing of mitochondrial tRNAs. The chain is Pentatricopeptide repeat-containing protein 1, mitochondrial (Ptcd1) from Rattus norvegicus (Rat).